The sequence spans 366 residues: 5-hydroxytryptamine receptor 1F (366 aa).

The Extracellular portion of the chain corresponds to 1–24 (MDFLNASDQNLTSEELLNRMPSKI). Asn-5 and Asn-10 each carry an N-linked (GlcNAc...) asparagine glycan. A helical membrane pass occupies residues 25 to 49 (LVSLTLSGLALMTTTINSLVIAAII). Topologically, residues 50-59 (VTRKLHHPAN) are cytoplasmic. The chain crosses the membrane as a helical span at residues 60-81 (YLICSLAVTDFLVAVLVMPFSI). Over 82-96 (VYIVRESWIMGQVLC) the chain is Extracellular. Residues Cys-96 and Cys-172 are joined by a disulfide bond. A helical membrane pass occupies residues 97–119 (DIWLSVDIICCTCSILHLSAIAL). Asp-103 and Cys-107 together coordinate serotonin. The short motif at 120-122 (DRY) is the DRY motif; important for ligand-induced conformation changes element. Topologically, residues 120-139 (DRYRAITDAVEYARKRTPRH) are cytoplasmic. A helical transmembrane segment spans residues 140 to 159 (AGIMITIVWVISVFISMPPL). Over 160-178 (FWRHQGTSRDDECVIKHDH) the chain is Extracellular. Residues 179 to 202 (IVSTIYSTFGAFYIPLVLILILYY) form a helical membrane-spanning segment. Topologically, residues 203–291 (KIYRAARTLY…KISGTRERKA (89 aa)) are cytoplasmic. The chain crosses the membrane as a helical span at residues 292–315 (ATTLGLILGAFVICWLPFFVKELV). Residues 316-327 (VNVCEKCKISEE) lie on the Extracellular side of the membrane. The chain crosses the membrane as a helical span at residues 328–350 (MSNFLAWLGYLNSLINPLIYTIF). Residues 343–347 (NPLIY) carry the NPxxY motif; important for ligand-induced conformation changes and signaling motif. At 351 to 366 (NEDFKKAFQKLVRCRY) the chain is on the cytoplasmic side.

The protein belongs to the G-protein coupled receptor 1 family. In terms of tissue distribution, detected in hippocampus.

The protein resides in the cell membrane. Its function is as follows. G-protein coupled receptor for 5-hydroxytryptamine (serotonin). Also functions as a receptor for various alkaloids and psychoactive substances. Ligand binding causes a conformation change that triggers signaling via guanine nucleotide-binding proteins (G proteins) and modulates the activity of downstream effectors, such as adenylate cyclase. HTR1F is coupled to G(i)/G(o) G alpha proteins and mediates inhibitory neurotransmission by inhibiting adenylate cyclase activity. This Mus musculus (Mouse) protein is 5-hydroxytryptamine receptor 1F (Htr1f).